The following is a 570-amino-acid chain: Sulfite reductase [NADPH] hemoprotein beta-component (570 aa).

Residues Cys-434, Cys-440, Cys-479, and Cys-483 each coordinate [4Fe-4S] cluster. Cys-483 contacts siroheme.

It belongs to the nitrite and sulfite reductase 4Fe-4S domain family. As to quaternary structure, alpha(8)-beta(8). The alpha component is a flavoprotein, the beta component is a hemoprotein. The cofactor is siroheme. [4Fe-4S] cluster serves as cofactor.

It carries out the reaction hydrogen sulfide + 3 NADP(+) + 3 H2O = sulfite + 3 NADPH + 4 H(+). It functions in the pathway sulfur metabolism; hydrogen sulfide biosynthesis; hydrogen sulfide from sulfite (NADPH route): step 1/1. In terms of biological role, component of the sulfite reductase complex that catalyzes the 6-electron reduction of sulfite to sulfide. This is one of several activities required for the biosynthesis of L-cysteine from sulfate. This is Sulfite reductase [NADPH] hemoprotein beta-component from Klebsiella pneumoniae subsp. pneumoniae (strain ATCC 700721 / MGH 78578).